The primary structure comprises 188 residues: 3-deoxy-D-manno-octulosonate 8-phosphate phosphatase KdsC (188 aa).

Mg(2+) contacts are provided by D32 and D34. Substrate contacts are provided by residues D34, 55-59 (NVRDG), R63, R78, R86, and K102. Mg(2+) is bound at residue D125.

It belongs to the KdsC family. Homotetramer. It depends on Mg(2+) as a cofactor.

The catalysed reaction is 3-deoxy-alpha-D-manno-2-octulosonate-8-phosphate + H2O = 3-deoxy-alpha-D-manno-oct-2-ulosonate + phosphate. It functions in the pathway carbohydrate biosynthesis; 3-deoxy-D-manno-octulosonate biosynthesis; 3-deoxy-D-manno-octulosonate from D-ribulose 5-phosphate: step 3/3. Its pathway is bacterial outer membrane biogenesis; lipopolysaccharide biosynthesis. Functionally, catalyzes the hydrolysis of 3-deoxy-D-manno-octulosonate 8-phosphate (KDO 8-P) to 3-deoxy-D-manno-octulosonate (KDO) and inorganic phosphate. The chain is 3-deoxy-D-manno-octulosonate 8-phosphate phosphatase KdsC from Escherichia coli (strain K12).